The following is a 236-amino-acid chain: Urease accessory protein UreG (236 aa).

Positions 1 to 26 (MHDHSLHSGHDHGLGPGSFHDRGAPH) are disordered. 42 to 49 (GPVGSGKT) is a GTP binding site.

The protein belongs to the SIMIBI class G3E GTPase family. UreG subfamily. In terms of assembly, homodimer. UreD, UreF and UreG form a complex that acts as a GTP-hydrolysis-dependent molecular chaperone, activating the urease apoprotein by helping to assemble the nickel containing metallocenter of UreC. The UreE protein probably delivers the nickel.

The protein localises to the cytoplasm. Functionally, facilitates the functional incorporation of the urease nickel metallocenter. This process requires GTP hydrolysis, probably effectuated by UreG. The polypeptide is Urease accessory protein UreG (Anaeromyxobacter sp. (strain Fw109-5)).